We begin with the raw amino-acid sequence, 384 residues long: 1-deoxy-D-xylulose 5-phosphate reductoisomerase (384 aa).

Residues threonine 10, glycine 11, serine 12, isoleucine 13, arginine 37, asparagine 38, and asparagine 124 each contribute to the NADPH site. Lysine 125 contributes to the 1-deoxy-D-xylulose 5-phosphate binding site. Position 126 (glutamate 126) interacts with NADPH. Aspartate 150 is a Mn(2+) binding site. Residues serine 151, glutamate 152, serine 176, and histidine 199 each coordinate 1-deoxy-D-xylulose 5-phosphate. Glutamate 152 is a Mn(2+) binding site. Glycine 205 contributes to the NADPH binding site. 4 residues coordinate 1-deoxy-D-xylulose 5-phosphate: serine 212, asparagine 217, lysine 218, and glutamate 221. A Mn(2+)-binding site is contributed by glutamate 221.

This sequence belongs to the DXR family. Mg(2+) serves as cofactor. Requires Mn(2+) as cofactor.

It catalyses the reaction 2-C-methyl-D-erythritol 4-phosphate + NADP(+) = 1-deoxy-D-xylulose 5-phosphate + NADPH + H(+). It participates in isoprenoid biosynthesis; isopentenyl diphosphate biosynthesis via DXP pathway; isopentenyl diphosphate from 1-deoxy-D-xylulose 5-phosphate: step 1/6. In terms of biological role, catalyzes the NADPH-dependent rearrangement and reduction of 1-deoxy-D-xylulose-5-phosphate (DXP) to 2-C-methyl-D-erythritol 4-phosphate (MEP). The sequence is that of 1-deoxy-D-xylulose 5-phosphate reductoisomerase from Clostridium perfringens (strain 13 / Type A).